Here is a 207-residue protein sequence, read N- to C-terminus: Outer-membrane lipoprotein carrier protein (207 aa).

The N-terminal stretch at 1–21 (MRAIRMLLVSALALGTVTAYA) is a signal peptide.

Belongs to the LolA family. Monomer.

The protein localises to the periplasm. Functionally, participates in the translocation of lipoproteins from the inner membrane to the outer membrane. Only forms a complex with a lipoprotein if the residue after the N-terminal Cys is not an aspartate (The Asp acts as a targeting signal to indicate that the lipoprotein should stay in the inner membrane). This is Outer-membrane lipoprotein carrier protein from Pseudomonas putida (strain GB-1).